The primary structure comprises 128 residues: Flagellar hook-basal body complex protein FliE (128 aa).

The disordered stretch occupies residues 1-60 (MRPVASFRPPPTFSALQGGASSQATKTAGIDQRGTNQAFSLLDPQSTQSNSTDSSFGEMG). Residues 33–55 (RGTNQAFSLLDPQSTQSNSTDSS) are compositionally biased toward polar residues.

The protein belongs to the FliE family.

The protein localises to the bacterial flagellum basal body. This Rhodopirellula baltica (strain DSM 10527 / NCIMB 13988 / SH1) protein is Flagellar hook-basal body complex protein FliE.